Consider the following 356-residue polypeptide: Tyrosine recombinase XerS (356 aa).

The 106-residue stretch at 16–121 (IMPWFVLDYY…ALSSLYKYLT (106 aa)) folds into the Core-binding (CB) domain. In terms of domain architecture, Tyr recombinase spans 169-354 (EFLDYVDCEY…VNDEQKNALD (186 aa)). Residues arginine 210, lysine 234, histidine 306, arginine 309, and histidine 332 contribute to the active site. The active-site O-(3'-phospho-DNA)-tyrosine intermediate is tyrosine 341.

It belongs to the 'phage' integrase family. XerS subfamily.

Its subcellular location is the cytoplasm. Its activity is regulated as follows. FtsK is required for recombination. In terms of biological role, site-specific tyrosine recombinase, which acts by catalyzing the cutting and rejoining of the recombining DNA molecules. Essential to convert dimers of the bacterial chromosome into monomers to permit their segregation at cell division. This Streptococcus uberis (strain ATCC BAA-854 / 0140J) protein is Tyrosine recombinase XerS.